The chain runs to 218 residues: Putative inactive cathepsin L-like protein CTSL3P (218 aa).

2 disordered regions span residues 144–173 (GDWKVQGHRGASGESLLASGESQQSPEVAQ) and 195–218 (GDEDHDEDKWPHDMRNHLAGEAQV). Residues 201 to 212 (EDKWPHDMRNHL) show a composition bias toward basic and acidic residues.

The protein belongs to the peptidase C1 family.

The sequence is that of Putative inactive cathepsin L-like protein CTSL3P (CTSL3P) from Homo sapiens (Human).